The sequence spans 861 residues: Protein argonaute-3 (861 aa).

M1 is subject to N-acetylmethionine. Positions P230–A349 constitute a PAZ domain. Residues L518–V820 form the Piwi domain. Residues Y530 to K567 form an interaction with guide RNA region. The a divalent metal cation site is built by D598, E638, and D670. The interaction with guide RNA stretch occupies residues Q758 to Y806. H809 provides a ligand contact to a divalent metal cation. Residues R824–A847 are disordered. At S826 the chain carries Phosphoserine.

Belongs to the argonaute family. Ago subfamily. In terms of assembly, interacts with EIF4B, IMP8, PRMT5 and TNRC6B. Interacts with APOBEC3F, APOBEC3G and APOBEC3H. Interacts with EDC4. In terms of processing, ubiquitinated on surface-exposed lysines by a SCF-like E3 ubiquitin-protein ligase complex containing ZSWIM8 during target-directed microRNA degradation (TDMD), a process that mediates degradation of microRNAs (miRNAs). Ubiquitination by the SCF-like E3 ubiquitin-protein ligase complex containing ZSWIM8 leads to its subsequent degradation, thereby exposing miRNAs for degradation. ZSWIM8 recognizes and binds AGO3 when it is engaged with a TDMD target.

It localises to the cytoplasm. Its subcellular location is the P-body. The enzyme catalyses Endonucleolytic cleavage to 5'-phosphomonoester.. Its function is as follows. Required for RNA-mediated gene silencing (RNAi). Binds to short RNAs such as microRNAs (miRNAs) and represses the translation of mRNAs which are complementary to them. Proposed to be involved in stabilization of small RNA derivates (siRNA) derived from processed RNA polymerase III-transcribed Alu repeats containing a DR2 retinoic acid response element (RARE) in stem cells and in the subsequent siRNA-dependent degradation of a subset of RNA polymerase II-transcribed coding mRNAs by recruiting a mRNA decapping complex involving EDC4. Possesses RNA slicer activity but only on select RNAs bearing 5'- and 3'-flanking sequences to the region of guide-target complementarity. The polypeptide is Protein argonaute-3 (AGO3) (Bos taurus (Bovine)).